We begin with the raw amino-acid sequence, 882 residues long: MAYRKRGARRETNLKQDERMQEKEDSKNINNDSPKSQLSEKVLSKKEEIITDNQEEVKISDEVKKSNKEESKQLLEVLKTKEEHQKEVQYEILQKTIPTFEPKESILKKLEDIKPEQAKKQTKLFRIFEPKQLPIYRANGERELRNRWYWKLKRDTLPDGDYDVREYFLNLYDQVLMEMPDYLLLKDMAVENKNSRDAGKVVDSETAAICDAIFQDEETEGAVRRFIAEMRQRVQADRNVVNYPSILHPIDHAFNGYFLQHQLVEPLNNDIIFNYIPERIRNDVNYILNMDRNLPSTARYIRPNLLQDRLNLHDNFESLWDTITTSNYILARSVVPDLKELVSTEAQIQKMSQDLQLEALTIQSETQFLTGINSQAANDCFKTLIAAMLSQRTMSLDFVTTNYMSLISGMWLLTVIPNDMFIRESLVACQLAIINTIVYPAFGMQRMHYRNGDPQTPFQIAEQQIQNFQVANWLHFVNYNQFRQVVIDGVLNQVLNDNIRNGHVVNQLMEALMQLSRQQFPTMPVDYKRSIQRGILLLSNRLGQLVDLTRLLSYNYETLMACITMNMQHVQTLTTEKLQLTSVTSLCMLIGNATVIPSPQTLFHYYNVNVNFHSNYNERINDAVAIITAANRLNLYQKKMKSIVEDFLKRLQIFDVARVPDDQMYRLRDRLRLLPVEIRRLDIFNLIAMNMEQIERASDKIAQGVIIAYRDMQLERDEMYGYVNIARNLDGFQQINLEELMRSGDYAQITNMLLNNQPVALVGALPFITDSSVISLIAKLDATVFAQIVKLRKVDTLKPILYKINSDSNDFYLVANYDWIPTSTTKVYKQVPQQFDFRASMHMLTSNLTFTVYSDLLAFVSADTVEPINAVAFDNMRIMNEL.

The disordered stretch occupies residues 1 to 45 (MAYRKRGARRETNLKQDERMQEKEDSKNINNDSPKSQLSEKVLSK). A 5-fold hub; involved in the encapsidation of VP1 and VP3 region spans residues 1–82 (MAYRKRGARR…QLLEVLKTKE (82 aa)). Basic and acidic residues predominate over residues 9–27 (RRETNLKQDERMQEKEDSK). The segment covering 28–39 (NINNDSPKSQLS) has biased composition (polar residues). Hydrophobic stretches follow at residues 396–416 (LDFVTTNYMSLISGMWLLTVI) and 424–444 (ESLVACQLAIINTIVYPAFGM).

This sequence belongs to the rotavirus VP2 family. Homodecamer; each decamer is made up of two conformers of VP2, called VP2A and VP2B. Interacts with a VP1-VP3 complex. Interacts with the intermediate capsid protein VP6. Interacts with NSP5. Interacts (via N-terminus) with NSP2. In terms of processing, sumoylated with SUMO1 and SUMO2. Sumoylation of viral proteins seems to have a positive role on viral replication.

The protein resides in the virion. Functionally, inner capsid protein that self-assembles to form an icosahedral capsid with a T=2 symmetry, which consists of 120 copies of VP2, with channels at each of its five-fold vertices. This capsid constitutes the innermost concentric layer of the viral mature particle. It encapsidates the polymerase VP1, the capping enzyme VP3 and the genomic dsRNA, thereby defining the core. The innermost VP2 capsid and the intermediate VP6 capsid remain intact following cell entry to protect the dsRNA from degradation and to prevent unfavorable antiviral responses in the host cell during all the replication cycle of the virus. Nascent transcripts are transcribed within the structural confines of this double-layered particle (DLP) and are extruded through the channels formed by VP2 N-termini. VP2 is required for the replicase activity of VP1 polymerase. Probably recruits a copy of a VP1-VP3 complex, potentially along with a segment of plus-strand RNA, as a decamer of VP2 assembles. May activate the autoinhibited VP1/RNA complex to coordinate packaging and genome replication. The protein is Inner capsid protein VP2 of Macaca mulatta (Rhesus macaque).